Consider the following 154-residue polypeptide: Major allergen Api g 1, isoallergen 1 (154 aa).

It belongs to the BetVI family.

This is Major allergen Api g 1, isoallergen 1 from Apium graveolens (Celery).